The sequence spans 467 residues: 6-phospho-beta-galactosidase (467 aa).

D-galactose 6-phosphate-binding residues include Gln19, His116, Asn159, Glu160, and Asn297. Residue Glu160 is the Proton donor of the active site. Glu375 serves as the catalytic Nucleophile. 4 residues coordinate D-galactose 6-phosphate: Ser428, Trp429, Lys435, and Tyr437.

Belongs to the glycosyl hydrolase 1 family.

It carries out the reaction a 6-phospho-beta-D-galactoside + H2O = D-galactose 6-phosphate + an alcohol. It functions in the pathway carbohydrate metabolism; lactose degradation; D-galactose 6-phosphate and beta-D-glucose from lactose 6-phosphate: step 1/1. With respect to regulation, inhibited by both galactose-6-phosphate and ATP. The chain is 6-phospho-beta-galactosidase from Leptotrichia buccalis (strain ATCC 14201 / DSM 1135 / JCM 12969 / NCTC 10249 / C-1013-b).